A 91-amino-acid chain; its full sequence is Succinate dehydrogenase assembly factor 1A, mitochondrial (91 aa).

This sequence belongs to the complex I LYR family. SDHAF1 subfamily. Interacts with the iron-sulfur protein subunit within the SDH catalytic dimer.

Its subcellular location is the mitochondrion matrix. Functionally, plays an essential role in the assembly of succinate dehydrogenase (SDH), an enzyme complex (also referred to as respiratory complex II) that is a component of both the tricarboxylic acid (TCA) cycle and the mitochondrial electron transport chain, and which couples the oxidation of succinate to fumarate with the reduction of ubiquinone (coenzyme Q) to ubiquinol. Promotes maturation of the iron-sulfur protein subunit of the SDH catalytic dimer, protecting it from the deleterious effects of oxidants. May act together with SDHAF3. This Dictyostelium discoideum (Social amoeba) protein is Succinate dehydrogenase assembly factor 1A, mitochondrial.